We begin with the raw amino-acid sequence, 73 residues long: Large ribosomal subunit protein bL31 (73 aa).

The protein belongs to the bacterial ribosomal protein bL31 family. Type A subfamily. Part of the 50S ribosomal subunit.

Its function is as follows. Binds the 23S rRNA. The chain is Large ribosomal subunit protein bL31 from Rhizobium rhizogenes (strain K84 / ATCC BAA-868) (Agrobacterium radiobacter).